Reading from the N-terminus, the 1015-residue chain is Putative calcium-transporting ATPase 7, plasma membrane-type (1015 aa).

At methionine 1 the chain carries N-acetylmethionine. Over 1–161 (MESYLNSNFD…NKFAESELRS (161 aa)) the chain is Cytoplasmic. An interaction with calmodulin region spans residues 20-31 (VLEKWRNLCSVV). Serine 45 carries the post-translational modification Phosphoserine; by CPK. The helical transmembrane segment at 162 to 182 (FWVFVWEALQDMTLMILGVCA) threads the bilayer. Residues 183–200 (FVSLIVGIATEGWPQGSH) lie on the Lumenal side of the membrane. Residues 201 to 221 (DGLGIVASILLVVFVTATSDY) form a helical membrane-spanning segment. At 222 to 349 (RQSLQFRDLD…DDETPLQVKL (128 aa)) the chain is on the cytoplasmic side. The chain crosses the membrane as a helical span at residues 350–369 (NGVATIIGKIGLSFAIVTFA). Residues 370-399 (VLVQGMFMRKLSLGPHWWWSGDDALELLEY) are Lumenal-facing. A helical transmembrane segment spans residues 400-417 (FAIAVTIVVVAVPEGLPL). Residues 418–811 (AVTLSLAFAM…KWGRSVYINI (394 aa)) are Cytoplasmic-facing. The 4-aspartylphosphate intermediate role is filled by aspartate 455. 2 residues coordinate Mg(2+): aspartate 756 and aspartate 760. A helical membrane pass occupies residues 812 to 830 (QKFVQFQLTVNVVALIVNF). Topologically, residues 831–841 (SSACLTGSAPL) are lumenal. A helical transmembrane segment spans residues 842–862 (TAVQLLWVNMIMDTLGALALA). Over 863–882 (TEPPNNELMKRMPVGRRGNF) the chain is Cytoplasmic. The helical transmembrane segment at 883 to 905 (ITNAMWRNILGQAVYQFIIIWIL) threads the bilayer. Residues 906–917 (QAKGKSMFGLVG) lie on the Lumenal side of the membrane. The chain crosses the membrane as a helical span at residues 918 to 939 (SDSTLVLNTLIFNCFVFCQVFN). The Cytoplasmic portion of the chain corresponds to 940–957 (EVSSREMEEIDVFKGILD). Residues 958–979 (NYVFVVVIGATVFFQIIIIEFL) form a helical membrane-spanning segment. Over 980–989 (GTFASTTPLT) the chain is Lumenal. A helical transmembrane segment spans residues 990-1011 (IVQWFFSIFVGFLGMPIAAGLK). Residues 1012–1015 (KIPV) are Cytoplasmic-facing.

It belongs to the cation transport ATPase (P-type) (TC 3.A.3) family. Type IIB subfamily.

It localises to the membrane. The catalysed reaction is Ca(2+)(in) + ATP + H2O = Ca(2+)(out) + ADP + phosphate + H(+). With respect to regulation, activated by calmodulin. Its function is as follows. This magnesium-dependent enzyme catalyzes the hydrolysis of ATP coupled with the translocation of calcium from the cytosol out of the cell or into organelles. In Arabidopsis thaliana (Mouse-ear cress), this protein is Putative calcium-transporting ATPase 7, plasma membrane-type (ACA7).